Consider the following 250-residue polypeptide: Heat stress transcription factor C-1b (250 aa).

The stretch at 129-182 (EEGEEVRGTIEAVQRLREEQRGMEEELQAMDQRLRAAESRPGQMMAFLAKLADE) forms a coiled coil. The hydrophobic repeat HR-A/B stretch occupies residues 144–180 (LREEQRGMEEELQAMDQRLRAAESRPGQMMAFLAKLA). The disordered stretch occupies residues 199–226 (AAGNNGSDPCKRRRIGADTGRGGVATGG). Residues 209–212 (KRRR) carry the Nuclear localization signal motif.

This sequence belongs to the HSF family. Class C subfamily. Homotrimer. Exhibits temperature-dependent phosphorylation.

It localises to the nucleus. Transcriptional regulator that specifically binds DNA of heat shock promoter elements (HSE). This chain is Heat stress transcription factor C-1b (HSFC1B), found in Oryza sativa subsp. japonica (Rice).